Reading from the N-terminus, the 325-residue chain is Lipid droplet-associated hydrolase (325 aa).

The active-site Nucleophile is the Ser139. Active-site charge relay system residues include Asp271 and His300.

This sequence belongs to the AB hydrolase superfamily. LDAH family. As to expression, present in macrophage-rich areas in atherosclerotic lesions (at protein level). Expressed in monocytes and monocyte-derived macrophages (at protein level).

It localises to the lipid droplet. It is found in the endoplasmic reticulum. The catalysed reaction is a cholesterol ester + H2O = cholesterol + a fatty acid + H(+). In terms of biological role, probable serine lipid hydrolase associated with lipid droplets. Has low cholesterol esterase activity. Appears to lack triglyceride lipase activity. Involved in cholesterol and triglyceride homeostasis; has opposing effects, stimulating cellular triglyceride accumulation and cellular cholesterol release. Acts antagonistically with PNPLA2/ATGL in regulation of cellular lipid stores. May regulate triglyceride accumulation indirectly through stimulation of PNPLA2/ATGL ubiquitination and proteasomal degradation. Promotes microtubule-dependent lipid droplet fusion. Highly expressed in macrophage-rich areas in atherosclerotic lesions, suggesting that it could promote cholesterol ester turnover in macrophages. This Homo sapiens (Human) protein is Lipid droplet-associated hydrolase.